The primary structure comprises 419 residues: Tyrosine--tRNA ligase (419 aa).

Tyr34 contributes to the L-tyrosine binding site. A 'HIGH' region motif is present at residues 39 to 48; that stretch reads PSGDSMHIGH. Positions 168 and 172 each coordinate L-tyrosine. A 'KMSKS' region motif is present at residues 230 to 234; the sequence is KFGKS. Position 233 (Lys233) interacts with ATP. The region spanning 352-418 is the S4 RNA-binding domain; it reads ANLVDWLVTL…GKKKYFLVSY (67 aa).

It belongs to the class-I aminoacyl-tRNA synthetase family. TyrS type 1 subfamily. Homodimer.

Its subcellular location is the cytoplasm. The enzyme catalyses tRNA(Tyr) + L-tyrosine + ATP = L-tyrosyl-tRNA(Tyr) + AMP + diphosphate + H(+). Catalyzes the attachment of tyrosine to tRNA(Tyr) in a two-step reaction: tyrosine is first activated by ATP to form Tyr-AMP and then transferred to the acceptor end of tRNA(Tyr). In Listeria monocytogenes serotype 4b (strain F2365), this protein is Tyrosine--tRNA ligase.